Reading from the N-terminus, the 262-residue chain is Acyl-[acyl-carrier-protein]--UDP-N-acetylglucosamine O-acyltransferase (262 aa).

This sequence belongs to the transferase hexapeptide repeat family. LpxA subfamily. Homotrimer.

It is found in the cytoplasm. It carries out the reaction a (3R)-hydroxyacyl-[ACP] + UDP-N-acetyl-alpha-D-glucosamine = a UDP-3-O-[(3R)-3-hydroxyacyl]-N-acetyl-alpha-D-glucosamine + holo-[ACP]. The protein operates within glycolipid biosynthesis; lipid IV(A) biosynthesis; lipid IV(A) from (3R)-3-hydroxytetradecanoyl-[acyl-carrier-protein] and UDP-N-acetyl-alpha-D-glucosamine: step 1/6. Functionally, involved in the biosynthesis of lipid A, a phosphorylated glycolipid that anchors the lipopolysaccharide to the outer membrane of the cell. This chain is Acyl-[acyl-carrier-protein]--UDP-N-acetylglucosamine O-acyltransferase, found in Burkholderia orbicola (strain MC0-3).